A 968-amino-acid polypeptide reads, in one-letter code: RNA polymerase-associated protein RapA (968 aa).

Residues 164–334 (DVGRRHAPRV…FARLRLLDPN (171 aa)) enclose the Helicase ATP-binding domain. An ATP-binding site is contributed by 177-184 (DEVGLGKT). The DEAH box signature appears at 280–283 (DEAH). The region spanning 490-685 (RVEWLMGYLT…ALKAQLEQGR (196 aa)) is the Helicase C-terminal domain.

The protein belongs to the SNF2/RAD54 helicase family. RapA subfamily. Interacts with the RNAP. Has a higher affinity for the core RNAP than for the holoenzyme. Its ATPase activity is stimulated by binding to RNAP.

Its function is as follows. Transcription regulator that activates transcription by stimulating RNA polymerase (RNAP) recycling in case of stress conditions such as supercoiled DNA or high salt concentrations. Probably acts by releasing the RNAP, when it is trapped or immobilized on tightly supercoiled DNA. Does not activate transcription on linear DNA. Probably not involved in DNA repair. The sequence is that of RNA polymerase-associated protein RapA from Salmonella newport (strain SL254).